A 1044-amino-acid polypeptide reads, in one-letter code: Probable pre-mRNA-splicing factor ATP-dependent RNA helicase DEAH6 (1044 aa).

Disordered regions lie at residues 99–134 and 152–211; these read EADH…SEQL and RRKV…VRRD. Acidic residues predominate over residues 157 to 167; the sequence is EDEDDGTESEE. The span at 168 to 211 shows a compositional bias: basic and acidic residues; sequence ERLRDQREREELEQHLRERDTARTRKLTEPKMSKKEQEEFVRRD. A Helicase ATP-binding domain is found at 414–577; the sequence is LNAVKDHQVL…FDQAPIFRFP (164 aa). 427 to 434 serves as a coordination point for ATP; it reads GETGSGKT. Residues 524–527 carry the DEAH box motif; the sequence is DEAH. Residues 599-775 enclose the Helicase C-terminal domain; sequence AITTVLTIHV…SVVLSLKSLG (177 aa).

The protein belongs to the DEAD box helicase family. DEAH subfamily. PRP2 sub-subfamily. As to expression, predominantly expressed in flowers.

The enzyme catalyses ATP + H2O = ADP + phosphate + H(+). In terms of biological role, may be involved in pre-mRNA splicing. The protein is Probable pre-mRNA-splicing factor ATP-dependent RNA helicase DEAH6 of Arabidopsis thaliana (Mouse-ear cress).